The sequence spans 203 residues: ESCRT-related protein CHMP1B (203 aa).

Coiled coils occupy residues 13–51 and 109–140; these read DLKFTSKSLQRQSRKCEKEEKAEKLKVKKAIEKGNMDGA and GNLQKMSETMDSFEKQFVNMEVQAEFMENAMA. The segment at 172–203 is disordered; that stretch reads PQPAGHAIPTKTEEKVDEDDLSRRLAELKARG. Positions 192-203 are enriched in basic and acidic residues; sequence LSRRLAELKARG.

It belongs to the SNF7 family. In terms of assembly, interacts with CHMP1A and LIP5. Interacts with VPS2.2.

The protein resides in the cytoplasm. It is found in the endosome membrane. Its function is as follows. Involved in ESCRT-dependent multivesicular body (MVB) formation and sorting of endosomal cargo proteins into MVBs. Mediates the MVB sorting of the auxin carriers PIN1, PIN2 and AUX1. Required for embryonic axis establishment and seedling growth. Required for autophagic degradation of plastid proteins. Promotes the efficient sequestration of cargo from plastids into autophagosomes. Mediates the efficient delivery of autophagic plastid bodies to the vacuole, but not into the cytoplasm. The sequence is that of ESCRT-related protein CHMP1B from Arabidopsis thaliana (Mouse-ear cress).